The sequence spans 245 residues: Probable 2-phosphosulfolactate phosphatase (245 aa).

It belongs to the ComB family. It depends on Mg(2+) as a cofactor.

The catalysed reaction is (2R)-O-phospho-3-sulfolactate + H2O = (2R)-3-sulfolactate + phosphate. The polypeptide is Probable 2-phosphosulfolactate phosphatase (Nostoc sp. (strain PCC 7120 / SAG 25.82 / UTEX 2576)).